The following is a 438-amino-acid chain: Exosome complex component RRP45 (438 aa).

Serine 65 bears the Phosphoserine mark. Position 297 is an N6-acetyllysine; alternate (lysine 297). A Glycyl lysine isopeptide (Lys-Gly) (interchain with G-Cter in SUMO1); alternate cross-link involves residue lysine 297. Lysine 297 is covalently cross-linked (Glycyl lysine isopeptide (Lys-Gly) (interchain with G-Cter in SUMO2); alternate). Phosphoserine is present on residues serine 306 and serine 346. Disordered regions lie at residues 337 to 365 and 377 to 438; these read AQIG…GGID and TGEV…RTAN. Acidic residues predominate over residues 349-364; the sequence is DLEDSEKEEEEEEGGI. Phosphoserine is present on residues serine 393 and serine 395. A compositionally biased stretch (basic residues) spans 427–438; sequence QGKRKKKKRTAN.

Belongs to the RNase PH family. In terms of assembly, component of the RNA exosome core complex (Exo-9), composed of EXOSC1, EXOSC2, EXOSC3, EXOSC4, EXOSC5, EXOSC6, EXOSC7, EXOSC8 and EXOSC9; within the complex interacts with EXOSC3, EXOSC4, EXOSC5 and DIS3. The catalytically inactive RNA exosome core complex (Exo-9) associates with the catalytic subunit EXOSC10/RRP6. Exo-9 may associate with DIS3 to form the nucleolar exosome complex, or DIS3L to form the cytoplasmic exosome complex. Exo-9 is formed by a hexameric base ring consisting of the heterodimers EXOSC4-EXOSC9, EXOSC5-EXOSC8 and EXOSC6-EXOSC7, and a cap ring consisting of EXOSC1, EXOSC2 and EXOSC3. The RNA exosome complex associates with cofactors C1D/RRP47, MPHOSPH6/MPP6 and MTREX/MTR4. Interacts (via C-terminus region) with SETX (via N-terminus domain); the interaction enhances SETX sumoylation. Interacts with DIS3; the interaction is direct.

It localises to the cytoplasm. The protein localises to the nucleus. Its subcellular location is the nucleolus. The protein resides in the nucleoplasm. Functionally, non-catalytic component of the RNA exosome complex which has 3'-&gt;5' exoribonuclease activity and participates in a multitude of cellular RNA processing and degradation events. In the nucleus, the RNA exosome complex is involved in proper maturation of stable RNA species such as rRNA, snRNA and snoRNA, in the elimination of RNA processing by-products and non-coding 'pervasive' transcripts, such as antisense RNA species and promoter-upstream transcripts (PROMPTs), and of mRNAs with processing defects, thereby limiting or excluding their export to the cytoplasm. The RNA exosome may be involved in Ig class switch recombination (CSR) and/or Ig variable region somatic hypermutation (SHM) by targeting AICDA deamination activity to transcribed dsDNA substrates. In the cytoplasm, the RNA exosome complex is involved in general mRNA turnover and specifically degrades inherently unstable mRNAs containing AU-rich elements (AREs) within their 3' untranslated regions, and in RNA surveillance pathways, preventing translation of aberrant mRNAs. It seems to be involved in degradation of histone mRNA. The catalytic inactive RNA exosome core complex of 9 subunits (Exo-9) is proposed to play a pivotal role in the binding and presentation of RNA for ribonucleolysis, and to serve as a scaffold for the association with catalytic subunits and accessory proteins or complexes. EXOSC9 binds to ARE-containing RNAs. The sequence is that of Exosome complex component RRP45 (Exosc9) from Mus musculus (Mouse).